A 325-amino-acid polypeptide reads, in one-letter code: MTKRVRLSDSFNPVYPYEDESTSQHPFINPGFISPNGFTQSPNGVLTLKCLTPLTTTGGSLQLKVGGGLTVDDTNGFLKENISATTPLVKTGHSIGLPLGAGLGTNENKLCIKLGQGLTFNSNNICIDDNINTLWTGVNPTEANCQIMNSSESNDCKLILTLVKTGALVTAFVYVIGVSNNFNMLTTHRNINFTAELFFDSTGNLLTRLSSLKTPLNHKSGQNMATGAITNAKGFMPSTTAYPFNDNSREKENYIYGTCYYTASDRTAFPIDISVMLNRRAINDETSYCIRITWSWNTGDAPEVQTSATTLVTSPFTFYYIREDD.

Belongs to the adenoviridae fiber family. In terms of assembly, homotrimer. Interacts with host receptor CD46. Interacts (via N-terminal tail region) with pentons.

It localises to the virion. The protein resides in the host nucleus. Forms spikes that protrude from each vertex of the icosahedral capsid. Interacts with host receptor CD46 to provide virion initial attachment to target cell. Fiber proteins are shed during virus entry, when virus is still at the cell surface. This is Fiber protein from Human adenovirus B serotype 11 (strain Slobiski) (HAdV-11).